A 321-amino-acid polypeptide reads, in one-letter code: Aspartate carbamoyltransferase catalytic subunit (321 aa).

Carbamoyl phosphate contacts are provided by R65 and T66. K93 lines the L-aspartate pocket. Residues R115, H143, and Q146 each coordinate carbamoyl phosphate. L-aspartate is bound by residues R176 and R230. G271 and P272 together coordinate carbamoyl phosphate.

It belongs to the aspartate/ornithine carbamoyltransferase superfamily. ATCase family. Heterododecamer (2C3:3R2) of six catalytic PyrB chains organized as two trimers (C3), and six regulatory PyrI chains organized as three dimers (R2).

It catalyses the reaction carbamoyl phosphate + L-aspartate = N-carbamoyl-L-aspartate + phosphate + H(+). It functions in the pathway pyrimidine metabolism; UMP biosynthesis via de novo pathway; (S)-dihydroorotate from bicarbonate: step 2/3. Functionally, catalyzes the condensation of carbamoyl phosphate and aspartate to form carbamoyl aspartate and inorganic phosphate, the committed step in the de novo pyrimidine nucleotide biosynthesis pathway. This is Aspartate carbamoyltransferase catalytic subunit from Bartonella tribocorum (strain CIP 105476 / IBS 506).